Consider the following 276-residue polypeptide: UPF0328 protein ECU04_0100 (276 aa).

Residues 1 to 24 (MGIIDVQRSHLTATPSKERDAPAH) form a disordered region.

This sequence belongs to the UPF0328 family.

The sequence is that of UPF0328 protein ECU04_0100 from Encephalitozoon cuniculi (strain GB-M1) (Microsporidian parasite).